Consider the following 384-residue polypeptide: Queuine tRNA-ribosyltransferase (384 aa).

The Proton acceptor role is filled by aspartate 92. Residues 92–96 (DSGGF), aspartate 146, glutamine 192, and glycine 219 each bind substrate. Positions 250 to 256 (GVGTPAE) are RNA binding. Catalysis depends on aspartate 269, which acts as the Nucleophile. Residues 274 to 278 (TRNAR) form an RNA binding; important for wobble base 34 recognition region. Positions 307, 309, 312, and 338 each coordinate Zn(2+).

It belongs to the queuine tRNA-ribosyltransferase family. As to quaternary structure, homodimer. Within each dimer, one monomer is responsible for RNA recognition and catalysis, while the other monomer binds to the replacement base PreQ1. It depends on Zn(2+) as a cofactor.

The enzyme catalyses 7-aminomethyl-7-carbaguanine + guanosine(34) in tRNA = 7-aminomethyl-7-carbaguanosine(34) in tRNA + guanine. It participates in tRNA modification; tRNA-queuosine biosynthesis. Catalyzes the base-exchange of a guanine (G) residue with the queuine precursor 7-aminomethyl-7-deazaguanine (PreQ1) at position 34 (anticodon wobble position) in tRNAs with GU(N) anticodons (tRNA-Asp, -Asn, -His and -Tyr). Catalysis occurs through a double-displacement mechanism. The nucleophile active site attacks the C1' of nucleotide 34 to detach the guanine base from the RNA, forming a covalent enzyme-RNA intermediate. The proton acceptor active site deprotonates the incoming PreQ1, allowing a nucleophilic attack on the C1' of the ribose to form the product. After dissociation, two additional enzymatic reactions on the tRNA convert PreQ1 to queuine (Q), resulting in the hypermodified nucleoside queuosine (7-(((4,5-cis-dihydroxy-2-cyclopenten-1-yl)amino)methyl)-7-deazaguanosine). The protein is Queuine tRNA-ribosyltransferase of Desulfosudis oleivorans (strain DSM 6200 / JCM 39069 / Hxd3) (Desulfococcus oleovorans).